Consider the following 257-residue polypeptide: Zinc import ATP-binding protein ZnuC (257 aa).

One can recognise an ABC transporter domain in the interval 5-220; that stretch reads ITLKNVAVNF…PEFIAMFGHH (216 aa). 37 to 44 is an ATP binding site; the sequence is GPNGAGKS.

This sequence belongs to the ABC transporter superfamily. Zinc importer (TC 3.A.1.15.5) family. As to quaternary structure, the complex is composed of two ATP-binding proteins (ZnuC), two transmembrane proteins (ZnuB) and a solute-binding protein (ZnuA).

The protein localises to the cell inner membrane. The catalysed reaction is Zn(2+)(out) + ATP(in) + H2O(in) = Zn(2+)(in) + ADP(in) + phosphate(in) + H(+)(in). In terms of biological role, part of the ABC transporter complex ZnuABC involved in zinc import. Responsible for energy coupling to the transport system. This is Zinc import ATP-binding protein ZnuC from Photorhabdus laumondii subsp. laumondii (strain DSM 15139 / CIP 105565 / TT01) (Photorhabdus luminescens subsp. laumondii).